A 192-amino-acid polypeptide reads, in one-letter code: Ribose 1,5-bisphosphate phosphokinase PhnN (192 aa).

15 to 22 lines the ATP pocket; that stretch reads GPSGAGKD.

Belongs to the ribose 1,5-bisphosphokinase family.

The enzyme catalyses alpha-D-ribose 1,5-bisphosphate + ATP = 5-phospho-alpha-D-ribose 1-diphosphate + ADP. It participates in metabolic intermediate biosynthesis; 5-phospho-alpha-D-ribose 1-diphosphate biosynthesis; 5-phospho-alpha-D-ribose 1-diphosphate from D-ribose 5-phosphate (route II): step 3/3. Catalyzes the phosphorylation of ribose 1,5-bisphosphate to 5-phospho-D-ribosyl alpha-1-diphosphate (PRPP). The sequence is that of Ribose 1,5-bisphosphate phosphokinase PhnN from Brucella abortus biovar 1 (strain 9-941).